We begin with the raw amino-acid sequence, 443 residues long: L-seryl-tRNA(Sec) selenium transferase (443 aa).

Lys-285 bears the N6-(pyridoxal phosphate)lysine mark.

Belongs to the SelA family. Requires pyridoxal 5'-phosphate as cofactor.

The protein localises to the cytoplasm. The enzyme catalyses L-seryl-tRNA(Sec) + selenophosphate + H(+) = L-selenocysteinyl-tRNA(Sec) + phosphate. It participates in aminoacyl-tRNA biosynthesis; selenocysteinyl-tRNA(Sec) biosynthesis; selenocysteinyl-tRNA(Sec) from L-seryl-tRNA(Sec) (bacterial route): step 1/1. Converts seryl-tRNA(Sec) to selenocysteinyl-tRNA(Sec) required for selenoprotein biosynthesis. This chain is L-seryl-tRNA(Sec) selenium transferase, found in Campylobacter lari (strain RM2100 / D67 / ATCC BAA-1060).